A 381-amino-acid chain; its full sequence is Cobalt-precorrin-5B C(1)-methyltransferase (381 aa).

The protein belongs to the CbiD family.

It catalyses the reaction Co-precorrin-5B + S-adenosyl-L-methionine = Co-precorrin-6A + S-adenosyl-L-homocysteine. It functions in the pathway cofactor biosynthesis; adenosylcobalamin biosynthesis; cob(II)yrinate a,c-diamide from sirohydrochlorin (anaerobic route): step 6/10. Catalyzes the methylation of C-1 in cobalt-precorrin-5B to form cobalt-precorrin-6A. The chain is Cobalt-precorrin-5B C(1)-methyltransferase from Methylococcus capsulatus (strain ATCC 33009 / NCIMB 11132 / Bath).